The primary structure comprises 1573 residues: MRVLACLLAALVGIQAVERLRLADGPHGCAGRLEVWHGGRWGTVCDDGWDLRDAAVACRQLGCGGALAAPGGAFFGEGAGPVWLSELACRGNEGQLGLCHHRGWKAHICSHEEDAGVVCAGQRVANSRDDSTSPLDGAPWPGLLLELSPSTEEPLVTHAPRPAGNPQNASRKKSPRPKQAKSTRAPLLTTGAPRQERLRLVSGPHRCAGRLEVWHGGRWGTVCDDGWDLRDAAVACRELGCGGALAAPGGARFGPGAGPVWMDDVGCGGGEQALRDCPRSPWGRSNCDHSEDAGLVCTGPAPRLRLADGPHGCAGRLEVWHGGRWGSVCDDAWDLRDAAVACRELGCGGALAAPGGAFFGEGSGPIILDDLRCRGNETALRFCPARPWGQHDCHHREDAGAVCDGMPLGYVPPTAPTDSNNSTPREAASRPPSTMTSQAPGTAGVSPPPASPTVLWEPGPEAGSPQLRLVAGPSKCSGRLEVWHDQRWGTVCDDSWDMRDSAVVCRELGCGGPQQPDPAAGRFGWGAGPIWLDDVGCVGTEASLSDCPAAPWGKHNCAHNEDVGVTCTGPPGLDSISDPFSWSWIPGLGRDRDAWLPGELATKPSASVTASVLEKTTTKAPGKMPKSTKKWVTKNAKRPTTQPPVMPTTKHSRAQSPPDLTSQTTAALTTEASRRPTSEFTRRPTTEAPQRWTSHTTATLTPQAPRERTTKTMAMLTTQGPQEMTSESTIKSIPQASLEPSAEIPEGSPESPKDPAPSPSVSTTGESGLFRVRLADGPNRCAGRLEVWHAGRWGTVCDDNWDLRDATVACWELGCGKVRPRVGKTHYGPGTGPIWLDDMGCKGSEASLSDCPSGAWGKHNCDHEEDVGLTCTGYTDYDDYPPWTWDPTSREDLAKGTTTAGVPGHTLPWRTTRRPGSSSPAIRRLPDTGSKDGYKLPWTWDTPSGRGLAEGTPTAGKLGPTLGAGTTRSPGSPPTLRVHGDTGSPRKPWPERRPPRPAATRTAPPTPSPGPSASPGPPGPALTSDSSRELTPHSALTSEATSDAPDTSPPTPDPASRTNPDLILTSPDFALSTPDSSVVPALTPEPSPTPLPTLPKELTSDPSTPSEVTSLSPTSEQVPESDTTPDLDTTPYSSTVSEYSRSPDPSPSPHPTTTPDPTMAPDPITTLNPTVTPHFPTTPHPTTTPHPTTITHSTMIPDPTTTPQPFTTITHSTMIPDPTTTPQPFTTMQPTTTPHSTTPHPTTTPHPTTITHSTMIPDPTTTPQPFTTMQPTTMPHPTTTPHPTTTPHPTTTPHPTTTPHPTMTPDPTTTPYPTTTPDPTTTPHPTTPDPSSTPVITTVSLPTSLGTELSSPTLAPTVKPSLHPQLTFTAPAPHTSTSQIPTLEPSPALESSPSRSSTATSMDPLSTEDFKPPRSQSPNLTPPPTHTPHSASDLTVSPDPLLSPTAHPLDHPPLDPLTLGPTPGQSPGPHGPCVAPTPPVRVMACEPPALVELVAAVRDVGGQLQRLTQVVEQERQERQALLLGLTQLVEAARGLGQLGEAVKRLAEMAWTTSMPAPTTTTPEEEERPLRGDV.

A signal peptide spans 1–16 (MRVLACLLAALVGIQA). Residues 20 to 120 (LRLADGPHGC…HEEDAGVVCA (101 aa)) form the SRCR 1 domain. Disulfide bonds link Cys45–Cys109, Cys58–Cys119, and Cys89–Cys99. A disordered region spans residues 153–192 (EPLVTHAPRPAGNPQNASRKKSPRPKQAKSTRAPLLTTGA). Asn168 is a glycosylation site (N-linked (GlcNAc...) asparagine). A compositionally biased stretch (basic residues) spans 170–181 (SRKKSPRPKQAK). SRCR domains follow at residues 198–298 (LRLV…LVCT) and 304–404 (LRLA…AVCD). 6 cysteine pairs are disulfide-bonded: Cys223/Cys287, Cys236/Cys297, Cys267/Cys277, Cys329/Cys393, Cys342/Cys403, and Cys373/Cys383. 2 N-linked (GlcNAc...) asparagine glycosylation sites follow: Asn376 and Asn420. The disordered stretch occupies residues 412–465 (PPTAPTDSNNSTPREAASRPPSTMTSQAPGTAGVSPPPASPTVLWEPGPEAGSP). The segment covering 431–440 (PPSTMTSQAP) has biased composition (polar residues). Residues 467–568 (LRLVAGPSKC…HNEDVGVTCT (102 aa)) enclose the SRCR 4 domain. Intrachain disulfides connect Cys492-Cys557, Cys505-Cys567, and Cys537-Cys547. The tract at residues 614-769 (EKTTTKAPGK…SVSTTGESGL (156 aa)) is disordered. Residues 626–637 (KSTKKWVTKNAK) show a composition bias toward basic residues. Residues 654–671 (AQSPPDLTSQTTAALTTE) are compositionally biased toward polar residues. Basic and acidic residues predominate over residues 672 to 685 (ASRRPTSEFTRRPT). Composition is skewed to polar residues over residues 687-702 (EAPQ…TLTP) and 711-735 (KTMA…SIPQ). The 101-residue stretch at 772 to 872 (VRLADGPNRC…HEEDVGLTCT (101 aa)) folds into the SRCR 5 domain. Disulfide bonds link Cys797-Cys861, Cys810-Cys871, and Cys841-Cys851. 2 disordered regions span residues 895-1475 (KGTT…PCVA) and 1554-1573 (MPAP…RGDV). The span at 924–934 (RLPDTGSKDGY) shows a compositional bias: basic and acidic residues. Composition is skewed to pro residues over residues 1004–1020 (PPTP…PPGP) and 1083–1093 (TPEPSPTPLPT). The span at 1101-1140 (DPSTPSEVTSLSPTSEQVPESDTTPDLDTTPYSSTVSEYS) shows a compositional bias: polar residues. Pro residues predominate over residues 1144–1160 (DPSPSPHPTTTPDPTMA). 2 stretches are compositionally biased toward low complexity: residues 1161-1175 (PDPI…TPHF) and 1185-1277 (PHPT…MPHP). Over residues 1278-1328 (TTTPHPTTTPHPTTTPHPTTTPHPTMTPDPTTTPYPTTTPDPTTTPHPTTP) the composition is skewed to pro residues. Polar residues-rich tracts occupy residues 1335 to 1354 (VITT…SPTL) and 1364 to 1380 (PQLT…TSQI). The span at 1381 to 1401 (PTLEPSPALESSPSRSSTATS) shows a compositional bias: low complexity. Residues 1464–1475 (GQSPGPHGPCVA) are compositionally biased toward pro residues.

As to quaternary structure, interacts with LGALS1 and laminin. As to expression, highly expressed in monocytes/macrophages and T-lymphocytes. Highly expressed in placenta and spleen, and also detected at lower levels in colon, and more weakly in lung, heart and kidney.

The protein localises to the secreted. The protein resides in the cytoplasm. Its function is as follows. Binds to extracellular matrix proteins. Binds to pathogen-associated molecular patterns (PAMPs) present on the cell walls of Gram-positive and Gram-negative bacteria and fungi, behaving as a pattern recognition receptor (PRR). Induces bacterial and fungal aggregation and subsequent inhibition of PAMP-induced cytokine release. Does not possess intrinsic bactericidal activity. May play a role in the innate defense and homeostasis of certain epithelial surfaces. This Homo sapiens (Human) protein is Soluble scavenger receptor cysteine-rich domain-containing protein SSC5D (SSC5D).